A 435-amino-acid chain; its full sequence is N-lysine methyltransferase SMYD2-A (435 aa).

Positions 7-241 (EGTERFLSPG…PEEEIFNSYI (235 aa)) constitute an SET domain. Position 17–19 (17–19 (KGR)) interacts with S-adenosyl-L-methionine. Positions 52, 55, 65, 68, 74, 78, 86, and 90 each coordinate Zn(2+). Residues 52–90 (CECCFTRKEGLSKCGKCKQAYYCNVECQRGDWPMHKLEC) form an MYND-type zinc finger. S-adenosyl-L-methionine-binding positions include His137, 206 to 207 (NH), and 258 to 260 (YFF).

This sequence belongs to the class V-like SAM-binding methyltransferase superfamily.

It is found in the cytoplasm. The protein resides in the cytosol. The protein localises to the nucleus. It carries out the reaction L-lysyl(4)-[histone H3] + 3 S-adenosyl-L-methionine = N(6),N(6),N(6)-trimethyl-L-lysyl(4)-[histone H3] + 3 S-adenosyl-L-homocysteine + 3 H(+). The enzyme catalyses L-lysyl-[protein] + S-adenosyl-L-methionine = N(6)-methyl-L-lysyl-[protein] + S-adenosyl-L-homocysteine + H(+). Its function is as follows. Protein-lysine N-methyltransferase that methylates both histones and non-histone proteins, including p53/TP53 and RB1. Specifically trimethylates histone H3 'Lys-4' (H3K4me3) in vivo. The activity requires interaction with HSP90alpha. Shows even higher methyltransferase activity on p53/TP53. Monomethylates 'Lys-370' of p53/TP53, leading to decreased DNA-binding activity and subsequent transcriptional regulation activity of p53/TP53. Monomethylates RB1 at 'Lys-860'. This chain is N-lysine methyltransferase SMYD2-A (smyd2a), found in Danio rerio (Zebrafish).